Here is a 211-residue protein sequence, read N- to C-terminus: Metalloproteinase inhibitor 3 (211 aa).

An N-terminal signal peptide occupies residues 1 to 23 (MTPWLGLVVLLGSWSLGDWGAEA). Cysteine 24 contributes to the Zn(2+) binding site. Involved in metalloproteinase-binding stretches follow at residues 24-27 (CTCS) and 88-89 (ES). 6 disulfides stabilise this stretch: cysteine 24–cysteine 91, cysteine 26–cysteine 118, cysteine 36–cysteine 143, cysteine 145–cysteine 192, cysteine 150–cysteine 155, and cysteine 163–cysteine 184. Positions 24-143 (CTCSPSHPQD…GLNYRYHLGC (120 aa)) constitute an NTR domain. The segment at 105–188 (TGRVYDGKMY…SKHYACIRQK (84 aa)) is mediates interaction with EFEMP1. The N-linked (GlcNAc...) asparagine glycan is linked to asparagine 207.

This sequence belongs to the protease inhibitor I35 (TIMP) family. As to quaternary structure, interacts with EFEMP1. Interacts with KDR.

It is found in the secreted. The protein resides in the extracellular space. It localises to the extracellular matrix. Its function is as follows. Mediates a variety of processes including matrix regulation and turnover, inflammation, and angiogenesis, through reversible inhibition of zinc protease superfamily enzymes, primarily matrix metalloproteinases (MMPs). Regulates extracellular matrix (ECM) remodeling through inhibition of matrix metalloproteinases (MMP) including MMP-1, MMP-2, MMP-3, MMP-7, MMP-9, MMP-13, MMP-14 and MMP-15. Additionally, modulates the processing of amyloid precursor protein (APP) and apolipoprotein E receptor ApoER2 by inhibiting two alpha-secretases ADAM10 and ADAM17. Functions as a tumor suppressor and a potent inhibitor of angiogenesis. Exerts its anti-angiogenic effect by directly interacting with vascular endothelial growth factor (VEGF) receptor-2/KDR, preventing its binding to the VEGFA ligand. Selectively induces apoptosis in angiogenic endothelial cells through a caspase-independent cell death pathway. Mechanistically, inhibits matrix-induced focal adhesion kinase PTK2 tyrosine phosphorylation and association with paxillin/PXN and disrupts the incorporation of ITGB3, PTK2 and PXN into focal adhesion contacts on the matrix. This chain is Metalloproteinase inhibitor 3 (TIMP3), found in Equus caballus (Horse).